We begin with the raw amino-acid sequence, 341 residues long: uncharacterized protein (341 aa).

58–82 (ITGGSSGIGAAAAKKIAEAGGTVVL) serves as a coordination point for NADP(+). Serine 194 contributes to the substrate binding site. The Proton acceptor role is filled by tyrosine 207. The disordered stretch occupies residues 309–329 (DSSAAKGSESQTDTSELDKRS).

The protein belongs to the short-chain dehydrogenases/reductases (SDR) family.

This is an uncharacterized protein from Mycobacterium bovis (strain ATCC BAA-935 / AF2122/97).